We begin with the raw amino-acid sequence, 898 residues long: MEWSSESAAVRRHRGTAERREGEAAASHRQREASAQEDAKGVGRMWGKTENGGGSRVAKTALSEARTALALALYLLALRALVQLSLQRLVLSRTSGLQGEFDARQARDYLEHITAIGPRTTGSTENEILTVQYLLEQIKLIEAQSNSLHSISVDIQRPTGSFSIDFLGGFTSYYDNITNVVVKLEPRDGAESAILANCHFDSVANSPGASDDAVSCAVMLEVLRVMSASPEPMQHAVVFLFNGAEENVLQASHGFITQHPWASLIRAFINLEAAGVGGKELVFQTGPENPWLVQAYVSAAKHPFASVVAQEVFQSGIIPSDTDFRIYRDFGNIPGIDLAFIENGYIYHTKYDTADRILIDSIQRAGDNILAVLKHLATSDTLASSSEYRHGSMVFFDVLGLLVIAYPSRVGSIINYMVVMAVVLYLGKKLLRPKHRNANYMRDFLCGLGITFISWFTSLVTVLIIAVFISLIGQSLSWYNYFYIAVCLYGTATVAKIIFIHTLAKRFYYMNASDLYLGELFFDTSLFVHCAFLVALTYQGFCSAFMSAVWVVFPLLTKLCVYKDFKKHGAQGRFVALYLLGMFIPYLYGLYLIWAVFEMFTPILGRSGSEIPPDVVLASILAVCVMILSSYFITFIYLVNSTKKTILTLILVCAVTFLLVCSGAFFPYSSNPESPKPKRVFLQHVSRTFHNLEGSVVKRDSGIWINGFDYTGMSHVTPHIPEINDTIRAHCEEDAPLCGFPWYLPVHFLIRKNWYLPAPEVSPRNPAHFRLVSKEKMPWDSIKLTFEATGPSHMSFYVRTHKGSTLSQWSLGNGIPVTSRGGDYFVFYSHGLQASAWRFWIEVQVSEEQAEGMVTVAIAAHYLSGENKRSSQLDALKKKFPDWSFPSAWVSTYSLFVF.

Residue M1 is modified to N-acetylmethionine. The segment at 1-55 (MEWSSESAAVRRHRGTAERREGEAAASHRQREASAQEDAKGVGRMWGKTENGGGS) is disordered. At 1–66 (MEWSSESAAV…VAKTALSEAR (66 aa)) the chain is on the cytoplasmic side. The span at 29-41 (RQREASAQEDAKG) shows a compositional bias: basic and acidic residues. A helical membrane pass occupies residues 67–87 (TALALALYLLALRALVQLSLQ). Residues 88-393 (RLVLSRTSGL…SSSEYRHGSM (306 aa)) are Lumenal-facing. An N-linked (GlcNAc...) asparagine glycan is attached at N176. A disulfide bridge links C198 with C216. H199 and D211 together coordinate Zn(2+). E245 (proton acceptor) is an active-site residue. Residues E246, E272, and H348 each contribute to the Zn(2+) site. Residues 394-414 (VFFDVLGLLVIAYPSRVGSII) traverse the membrane as a helical segment. Residues 415–451 (NYMVVMAVVLYLGKKLLRPKHRNANYMRDFLCGLGIT) lie on the Cytoplasmic side of the membrane. Residues 452–472 (FISWFTSLVTVLIIAVFISLI) form a helical membrane-spanning segment. Residues 473–480 (GQSLSWYN) lie on the Lumenal side of the membrane. A helical membrane pass occupies residues 481–501 (YFYIAVCLYGTATVAKIIFIH). Topologically, residues 502-515 (TLAKRFYYMNASDL) are cytoplasmic. The chain crosses the membrane as a helical span at residues 516-538 (YLGELFFDTSLFVHCAFLVALTY). Over 539 to 542 (QGFC) the chain is Lumenal. A helical membrane pass occupies residues 543–562 (SAFMSAVWVVFPLLTKLCVY). The Cytoplasmic portion of the chain corresponds to 563–573 (KDFKKHGAQGR). A helical membrane pass occupies residues 574-594 (FVALYLLGMFIPYLYGLYLIW). Over 595 to 615 (AVFEMFTPILGRSGSEIPPDV) the chain is Lumenal. Residues 616–636 (VLASILAVCVMILSSYFITFI) traverse the membrane as a helical segment. Over 637 to 645 (YLVNSTKKT) the chain is Cytoplasmic. Residues 646-666 (ILTLILVCAVTFLLVCSGAFF) traverse the membrane as a helical segment. At 667 to 898 (PYSSNPESPK…WVSTYSLFVF (232 aa)) the chain is on the lumenal side. N724 carries N-linked (GlcNAc...) asparagine glycosylation.

It belongs to the peptidase M28 family. The cofactor is Zn(2+).

It is found in the endoplasmic reticulum membrane. In terms of biological role, within the ovary, required for the organization of somatic cells and oocytes into discrete follicular structures. This Mus musculus (Mouse) protein is Endoplasmic reticulum metallopeptidase 1.